The chain runs to 104 residues: Endogenous retrovirus group K member 21 Rec protein (104 aa).

Residues methionine 1–threonine 48 form a disordered region. Basic residues predominate over residues alanine 10 to arginine 20. The short motif at arginine 13–arginine 20 is the Nuclear localization signal element. Residues tryptophan 49–leucine 58 carry the Nuclear export signal motif.

In terms of assembly, forms homodimers, homotrimers, and homotetramers via a C-terminal domain. Associates with XPO1 and with ZNF145.

The protein resides in the cytoplasm. The protein localises to the nucleus. It is found in the nucleolus. Functionally, retroviral replication requires the nuclear export and translation of unspliced, singly-spliced and multiply-spliced derivatives of the initial genomic transcript. Rec interacts with a highly structured RNA element (RcRE) present in the viral 3'LTR and recruits the cellular nuclear export machinery. This permits export to the cytoplasm of unspliced genomic or incompletely spliced subgenomic viral transcripts. The polypeptide is Endogenous retrovirus group K member 21 Rec protein (ERVK-21) (Homo sapiens (Human)).